The chain runs to 322 residues: L-asparaginase (322 aa).

Positions 3–322 constitute an Asparaginase/glutaminase domain; sequence KKVALITTGG…KEGIKDKFCY (320 aa). T13 functions as the O-isoaspartyl threonine intermediate in the catalytic mechanism. Residues S56 and 89-90 contribute to the substrate site; that span reads TD.

It belongs to the asparaginase 1 family. Homotetramer.

It localises to the cytoplasm. It catalyses the reaction L-asparagine + H2O = L-aspartate + NH4(+). The chain is L-asparaginase (ansA) from Bacillus licheniformis.